Here is a 144-residue protein sequence, read N- to C-terminus: Large ribosomal subunit protein uL14 (144 aa).

This sequence belongs to the universal ribosomal protein uL14 family. Part of the 50S ribosomal subunit. Forms a cluster with proteins L3 and L24e, part of which may contact the 16S rRNA in 2 intersubunit bridges.

Functionally, binds to 23S rRNA. Forms part of two intersubunit bridges in the 70S ribosome. In Pyrobaculum aerophilum (strain ATCC 51768 / DSM 7523 / JCM 9630 / CIP 104966 / NBRC 100827 / IM2), this protein is Large ribosomal subunit protein uL14.